The primary structure comprises 308 residues: Glucan 1,3-beta-glucosidase BGL2 (308 aa).

A signal peptide spans 1-18; it reads MQIKFLTTLATVLTSVAA. The active-site Proton donor is the E119. N-linked (GlcNAc...) asparagine glycosylation occurs at N197. E228 acts as the Nucleophile in catalysis.

It belongs to the glycosyl hydrolase 17 family.

The protein resides in the secreted. Its subcellular location is the cell wall. The protein localises to the cytoplasm. The enzyme catalyses Successive hydrolysis of beta-D-glucose units from the non-reducing ends of (1-&gt;3)-beta-D-glucans, releasing alpha-glucose.. In terms of biological role, cell wall glucan 1,3-beta-glucosidase involved in cell wall biosynthesis and virulence. Crucial for delivery of beta-1,3-glucan to the biofilm matrix and for accumulation of mature matrix biomass. Plays a role as a major antigen in human systemic candidiasis patients. The polypeptide is Glucan 1,3-beta-glucosidase BGL2 (BGL2) (Candida albicans (strain SC5314 / ATCC MYA-2876) (Yeast)).